The following is a 115-amino-acid chain: ER exit protein (115 aa).

This sequence belongs to the STEEP1 family.

In terms of biological role, may stimulate membrane curvature formation and subsequent endoplasmic reticulum exit site (ERES) establishment. This Schizosaccharomyces pombe (strain 972 / ATCC 24843) (Fission yeast) protein is ER exit protein.